A 126-amino-acid chain; its full sequence is Heavy metal-associated isoprenylated plant protein 14 (126 aa).

One can recognise an HMA domain in the interval 3-69; it reads AKNAVLQLSI…LCNTEIVSVD (67 aa). Cys123 bears the Cysteine methyl ester mark. Cys123 carries the S-farnesyl cysteine lipid modification. Residues 124–126 constitute a propeptide, removed in mature form; sequence VIM.

Belongs to the HIPP family.

Functionally, probable heavy-metal-binding protein. In Arabidopsis thaliana (Mouse-ear cress), this protein is Heavy metal-associated isoprenylated plant protein 14.